The chain runs to 80 residues: Large ribosomal subunit protein bL31 (80 aa).

Residues C16, C18, C38, and C41 each contribute to the Zn(2+) site.

The protein belongs to the bacterial ribosomal protein bL31 family. Type A subfamily. In terms of assembly, part of the 50S ribosomal subunit. Zn(2+) serves as cofactor.

Its function is as follows. Binds the 23S rRNA. This chain is Large ribosomal subunit protein bL31, found in Mycobacterium avium (strain 104).